The sequence spans 274 residues: RNA polymerase sigma factor SigI4 (274 aa).

Positions 87-100 match the Polymerase core binding motif; it reads EEYSVGLMAFNEAI. The segment at residues 226–245 is a DNA-binding region (H-T-H motif); it reads LSELMGLVNVHRKTVERNRK.

Belongs to the sigma-70 factor family. SigI subfamily. Interacts with RsgI4.

The protein localises to the cytoplasm. Negatively regulated by the anti-sigma-I factor RsgI4. Binding of the polysaccharide substrate to RsgI4 may lead to the release and activation of SigI4. In terms of biological role, sigma factors are initiation factors that promote the attachment of RNA polymerase to specific initiation sites and are then released. This sigma factor is involved in regulation of cellulosomal genes via an external polysaccharide-sensing mechanism. The chain is RNA polymerase sigma factor SigI4 from Acetivibrio thermocellus (strain ATCC 27405 / DSM 1237 / JCM 9322 / NBRC 103400 / NCIMB 10682 / NRRL B-4536 / VPI 7372) (Clostridium thermocellum).